Consider the following 157-residue polypeptide: uncharacterized protein (157 aa).

The signal sequence occupies residues 1–28; the sequence is MKRLFMKASLVLFAVVFVFAVKGAPAKA.

This is an uncharacterized protein from Bacillus subtilis (strain 168).